We begin with the raw amino-acid sequence, 470 residues long: Asparagine--tRNA ligase (470 aa).

This sequence belongs to the class-II aminoacyl-tRNA synthetase family. In terms of assembly, homodimer.

It is found in the cytoplasm. It carries out the reaction tRNA(Asn) + L-asparagine + ATP = L-asparaginyl-tRNA(Asn) + AMP + diphosphate + H(+). The chain is Asparagine--tRNA ligase from Blochmanniella floridana.